The sequence spans 246 residues: 4-hydroxy-tetrahydrodipicolinate reductase (246 aa).

Residues 8-13 (GISGRM), 75-77 (GTT), and 99-102 (ASNY) each bind NAD(+). The active-site Proton donor/acceptor is His-132. His-133 lines the (S)-2,3,4,5-tetrahydrodipicolinate pocket. The active-site Proton donor is Lys-136. 142–143 (GT) is a binding site for (S)-2,3,4,5-tetrahydrodipicolinate.

This sequence belongs to the DapB family.

The protein resides in the cytoplasm. It catalyses the reaction (S)-2,3,4,5-tetrahydrodipicolinate + NAD(+) + H2O = (2S,4S)-4-hydroxy-2,3,4,5-tetrahydrodipicolinate + NADH + H(+). The catalysed reaction is (S)-2,3,4,5-tetrahydrodipicolinate + NADP(+) + H2O = (2S,4S)-4-hydroxy-2,3,4,5-tetrahydrodipicolinate + NADPH + H(+). It functions in the pathway amino-acid biosynthesis; L-lysine biosynthesis via DAP pathway; (S)-tetrahydrodipicolinate from L-aspartate: step 4/4. Catalyzes the conversion of 4-hydroxy-tetrahydrodipicolinate (HTPA) to tetrahydrodipicolinate. This is 4-hydroxy-tetrahydrodipicolinate reductase from Akkermansia muciniphila (strain ATCC BAA-835 / DSM 22959 / JCM 33894 / BCRC 81048 / CCUG 64013 / CIP 107961 / Muc).